The primary structure comprises 103 residues: Small ribosomal subunit protein uS10 (103 aa).

This sequence belongs to the universal ribosomal protein uS10 family. In terms of assembly, part of the 30S ribosomal subunit.

Functionally, involved in the binding of tRNA to the ribosomes. The chain is Small ribosomal subunit protein uS10 from Xanthomonas axonopodis pv. citri (strain 306).